The chain runs to 153 residues: Myoglobin (153 aa).

In terms of domain architecture, Globin spans 2–147 (GLNDQEWQQV…FRNDMASKYK (146 aa)). His65 contacts nitrite. His65 serves as a coordination point for O2. Position 93 (His93) interacts with heme b.

It belongs to the globin family. Monomeric.

The protein resides in the cytoplasm. It is found in the sarcoplasm. The catalysed reaction is Fe(III)-heme b-[protein] + nitric oxide + H2O = Fe(II)-heme b-[protein] + nitrite + 2 H(+). It catalyses the reaction H2O2 + AH2 = A + 2 H2O. In terms of biological role, monomeric heme protein which primary function is to store oxygen and facilitate its diffusion within muscle tissues. Reversibly binds oxygen through a pentacoordinated heme iron and enables its timely and efficient release as needed during periods of heightened demand. Depending on the oxidative conditions of tissues and cells, and in addition to its ability to bind oxygen, it also has a nitrite reductase activity whereby it regulates the production of bioactive nitric oxide. Under stress conditions, like hypoxia and anoxia, it also protects cells against reactive oxygen species thanks to its pseudoperoxidase activity. This chain is Myoglobin (MB), found in Aptenodytes forsteri (Emperor penguin).